A 330-amino-acid polypeptide reads, in one-letter code: tRNA U34 carboxymethyltransferase (330 aa).

Carboxy-S-adenosyl-L-methionine contacts are provided by residues Lys91, Trp105, Lys110, Gly130, 152-154, 181-182, Met196, Tyr200, and Arg315; these read DPS and IE.

The protein belongs to the class I-like SAM-binding methyltransferase superfamily. CmoB family. In terms of assembly, homotetramer.

The enzyme catalyses carboxy-S-adenosyl-L-methionine + 5-hydroxyuridine(34) in tRNA = 5-carboxymethoxyuridine(34) in tRNA + S-adenosyl-L-homocysteine + H(+). Functionally, catalyzes carboxymethyl transfer from carboxy-S-adenosyl-L-methionine (Cx-SAM) to 5-hydroxyuridine (ho5U) to form 5-carboxymethoxyuridine (cmo5U) at position 34 in tRNAs. The polypeptide is tRNA U34 carboxymethyltransferase (Shewanella denitrificans (strain OS217 / ATCC BAA-1090 / DSM 15013)).